The sequence spans 140 residues: Small ribosomal subunit protein uS12 (140 aa).

A 3-methylthioaspartic acid modification is found at Asp102.

Belongs to the universal ribosomal protein uS12 family. As to quaternary structure, part of the 30S ribosomal subunit. Contacts proteins S8 and S17. May interact with IF1 in the 30S initiation complex.

With S4 and S5 plays an important role in translational accuracy. Functionally, interacts with and stabilizes bases of the 16S rRNA that are involved in tRNA selection in the A site and with the mRNA backbone. Located at the interface of the 30S and 50S subunits, it traverses the body of the 30S subunit contacting proteins on the other side and probably holding the rRNA structure together. The combined cluster of proteins S8, S12 and S17 appears to hold together the shoulder and platform of the 30S subunit. The protein is Small ribosomal subunit protein uS12 of Bacillus anthracis (strain A0248).